Reading from the N-terminus, the 329-residue chain is Glyceraldehyde-3-phosphate dehydrogenase 1 (329 aa).

Residues 11–12, D33, and K78 each bind NAD(+); that span reads RI. D-glyceraldehyde 3-phosphate-binding positions include 148–150, T179, 208–209, and R231; these read SCT and TG. The active-site Nucleophile is the C149. N313 is a binding site for NAD(+).

The protein belongs to the glyceraldehyde-3-phosphate dehydrogenase family. In terms of assembly, homotetramer.

It localises to the cytoplasm. It carries out the reaction D-glyceraldehyde 3-phosphate + phosphate + NAD(+) = (2R)-3-phospho-glyceroyl phosphate + NADH + H(+). Its pathway is carbohydrate degradation; glycolysis; pyruvate from D-glyceraldehyde 3-phosphate: step 1/5. The chain is Glyceraldehyde-3-phosphate dehydrogenase 1 (GAP1) from Kluyveromyces lactis (strain ATCC 8585 / CBS 2359 / DSM 70799 / NBRC 1267 / NRRL Y-1140 / WM37) (Yeast).